Consider the following 499-residue polypeptide: Potassium voltage-gated channel subfamily A member 2 (499 aa).

The disordered stretch occupies residues 1–27; sequence MTVATGEPADEAAALPGHPQDTYDPEA. Residues 1 to 125 form a tetramerization domain region; the sequence is MTVATGEPAD…YELGEEAMEM (125 aa). The Cytoplasmic segment spans residues 1–160; the sequence is MTVATGEPAD…LLFEYPESSG (160 aa). Residues 161-182 traverse the membrane as a helical segment; the sequence is PARIIAIVSVMVILISIVSFCL. The Extracellular segment spans residues 183-221; that stretch reads ETLPIFRDENEDMHGGGVTFHTYSNSTIGYQQSTSFTDP. Asparagine 207 carries N-linked (GlcNAc...) asparagine glycosylation. A helical membrane pass occupies residues 222–243; sequence FFIVETLCIIWFSFEFLVRFFA. Cysteine 244 carries the S-palmitoyl cysteine lipid modification. Residues 244–254 lie on the Cytoplasmic side of the membrane; the sequence is CPSKAGFFTNI. A helical membrane pass occupies residues 255–275; that stretch reads MNIIDIVAIIPYFITLGTELA. Over 276–289 the chain is Extracellular; sequence EKPEDAQQGQQAMS. A helical; Voltage-sensor transmembrane segment spans residues 290 to 310; sequence LAILRVIRLVRVFRIFKLSRH. Topologically, residues 311 to 325 are cytoplasmic; sequence SKGLQILGQTLKASM. The tract at residues 312–325 is S4-S5 linker; it reads KGLQILGQTLKASM. Residues 326–347 form a helical membrane-spanning segment; sequence RELGLLIFFLFIGVILFSSAVY. The Extracellular portion of the chain corresponds to 348-361; sequence FAEADERESQFPSI. Positions 362–373 form an intramembrane region, helical; the sequence is PDAFWWAVVSMT. The Selectivity filter signature appears at 374-379; the sequence is TVGYGD. An intramembrane segment occupies 374–381; sequence TVGYGDMV. Topologically, residues 382–388 are extracellular; it reads PTTIGGK. A helical transmembrane segment spans residues 389 to 417; sequence IVGSLCAIAGVLTIALPVPVIVSNFNYFY. Residues 418 to 499 lie on the Cytoplasmic side of the membrane; it reads HRETEGEEQA…VNITKMLTDV (82 aa). Position 429 is a phosphotyrosine (tyrosine 429). Serine 434, serine 440, serine 441, and serine 449 each carry phosphoserine. A Phosphotyrosine modification is found at tyrosine 458. Residue serine 468 is modified to Phosphoserine. The PDZ-binding signature appears at 497-499; that stretch reads TDV.

Belongs to the potassium channel family. A (Shaker) (TC 1.A.1.2) subfamily. Kv1.2/KCNA2 sub-subfamily. In terms of assembly, homotetramer and heterotetramer with other channel-forming alpha subunits, such as KCNA1, KCNA4, KCNA5, KCNA6 and KCNA7. Channel activity is regulated by interaction with the beta subunits, including KCNAB1 and KCNAB2. Identified in a complex with KCNA1 and KCNAB2. Identified in a complex with KCNA5 and KCNAB1. Interacts with the beta subunit KCNAB1. Identified in a complex with KCNA4 and FYN. Interacts with PTK2B. Interacts (via C-terminus) with CTTN. Interacts (via N-terminal cytoplasmic domain) with RHOA (GTP-bound form); this regulates channel activity by reducing location at the cell surface in response to CHRM1 activation. Interacts with DRD2. Interacts with SIGMAR1; cocaine consumption leads to increased interaction. Interacts with ADAM22. Interacts with CNTNAP2. Interacts (via C-terminus) with the PDZ domains of DLG1, DLG2 and DLG4. Interacts with ADAM11. Interacts with LYNX1. Phosphorylated on tyrosine residues; phosphorylation increases in response to ischemia. Phosphorylated on tyrosine residues by activated PTK2B/PYK2. Phosphorylation on tyrosine residues suppresses ion channel activity. Phosphorylated on tyrosine residues in response to CHRM1 activation; this abolishes interaction with CTTN. This is probably due to endocytosis of the phosphorylated channel subunits. Phosphorylated on serine residues in response to increased cAMP levels; phosphorylation is apparently not catalyzed by PKA. In terms of processing, N-glycosylated, with complex, sialylated N-glycans. As to expression, expressed in a wide variety of gastrointestinal smooth muscles. Not expressed in portal vein, renal artery, and uterus.

The protein localises to the cell membrane. It is found in the membrane. It localises to the cell projection. The protein resides in the axon. Its subcellular location is the synapse. The protein localises to the presynaptic cell membrane. It is found in the synaptosome. It localises to the endoplasmic reticulum membrane. The protein resides in the dendrite. Its subcellular location is the lamellipodium membrane. The protein localises to the cell junction. It is found in the paranodal septate junction. The enzyme catalyses K(+)(in) = K(+)(out). Inhibited by 4-aminopyridine (4-AP). Inhibited by dendrotoxin (DTX) and charybdotoxin (CTX), but not by tetraethylammonium (TEA). Inhibited by tityustoxin-K alpha (TsTX-Kalpha), a toxin that is highly specific for KCNA2. Inhibited by maurotoxin. Inhibited by kappaM conotoxins kappaM-RIIIJ and kappaM-RIIIK. Voltage-gated potassium channel that mediates transmembrane potassium transport in excitable membranes, primarily in the brain and the central nervous system, but also in the cardiovascular system. Prevents aberrant action potential firing and regulates neuronal output. Forms tetrameric potassium-selective channels through which potassium ions pass in accordance with their electrochemical gradient. The channel alternates between opened and closed conformations in response to the voltage difference across the membrane. Can form functional homotetrameric channels and heterotetrameric channels that contain variable proportions of KCNA1, KCNA2, KCNA4, KCNA5, KCNA6, KCNA7, and possibly other family members as well; channel properties depend on the type of alpha subunits that are part of the channel. Channel properties are modulated by cytoplasmic beta subunits that regulate the subcellular location of the alpha subunits and promote rapid inactivation of delayed rectifier potassium channels. In vivo, membranes probably contain a mixture of heteromeric potassium channel complexes, making it difficult to assign currents observed in intact tissues to any particular potassium channel family member. Homotetrameric KCNA2 forms a delayed-rectifier potassium channel that opens in response to membrane depolarization, followed by slow spontaneous channel closure. In contrast, a heteromultimer formed by KCNA2 and KCNA4 shows rapid inactivation. Regulates neuronal excitability and plays a role as pacemaker in the regulation of neuronal action potentials. KCNA2-containing channels play a presynaptic role and prevent hyperexcitability and aberrant action potential firing. Response to toxins that are selective for KCNA2-containing potassium channels suggests that in Purkinje cells, dendritic subthreshold KCNA2-containing potassium channels prevent random spontaneous calcium spikes, suppressing dendritic hyperexcitability without hindering the generation of somatic action potentials, and thereby play an important role in motor coordination. Plays a role in the induction of long-term potentiation of neuron excitability in the CA3 layer of the hippocampus. May function as down-stream effector for G protein-coupled receptors and inhibit GABAergic inputs to basolateral amygdala neurons. May contribute to the regulation of neurotransmitter release, such as gamma-aminobutyric acid (GABA). Contributes to the regulation of the axonal release of the neurotransmitter dopamine. Reduced KCNA2 expression plays a role in the perception of neuropathic pain after peripheral nerve injury, but not acute pain. Plays a role in the regulation of the time spent in non-rapid eye movement (NREM) sleep. The protein is Potassium voltage-gated channel subfamily A member 2 (KCNA2) of Canis lupus familiaris (Dog).